We begin with the raw amino-acid sequence, 187 residues long: MVKCTPLLALTVIVSAGSDALSDPTVKRLAKLATINQAPATQSNSDSKRVLRASDVPNEVAAGESRSPKSLWPWEVEDKLAPLKEKLISTSADDLEAGGSAKKNALPMTWRWLWQNQIETKKTPIDEISKEVQTAMDLISSKATHEELNKAGVSVSDYVKALKLTLPEVDVDVVNRGMEYNIHLGNK.

An N-terminal signal peptide occupies residues 1–20 (MVKCTPLLALTVIVSAGSDA). The short motif at 49-66 (RVLRASDVPNEVAAGESR) is the RxLR-dEER element.

The protein belongs to the RxLR effector family.

The protein resides in the secreted. It localises to the host cell. Functionally, secreted effector that acts as an elicitor of hypersensitive response (HR) specifically on plants carrying defense protein RPP39. The allele ATR39-1 is recognized by RPP39, whereas the ATR39-2 allele is nor recognized. In Hyaloperonospora arabidopsidis (strain Emoy2) (Downy mildew agent), this protein is Avirulence protein ATR39-2.